A 585-amino-acid polypeptide reads, in one-letter code: Aspartate--tRNA ligase (585 aa).

Glutamate 173 contacts L-aspartate. The aspartate stretch occupies residues 197-200; the sequence is QTLK. Position 219 (arginine 219) interacts with L-aspartate. ATP-binding positions include 219 to 221 and glutamine 228; that span reads RDE. Histidine 446 provides a ligand contact to L-aspartate. Residue glutamate 480 participates in ATP binding. L-aspartate is bound at residue arginine 487. 532–535 contacts ATP; the sequence is GLDR.

The protein belongs to the class-II aminoacyl-tRNA synthetase family. Type 1 subfamily. As to quaternary structure, homodimer.

It is found in the cytoplasm. It carries out the reaction tRNA(Asp) + L-aspartate + ATP = L-aspartyl-tRNA(Asp) + AMP + diphosphate. Catalyzes the attachment of L-aspartate to tRNA(Asp) in a two-step reaction: L-aspartate is first activated by ATP to form Asp-AMP and then transferred to the acceptor end of tRNA(Asp). This is Aspartate--tRNA ligase from Bacteroides fragilis (strain YCH46).